The sequence spans 236 residues: Syntaxin-8 (236 aa).

Over 1 to 215 the chain is Cytoplasmic; the sequence is MAPDPWFSTY…MVDRKSASCG (215 aa). Residues 42–65 are a coiled coil; the sequence is VTIRALLQNLKEKIALLKDLLLRA. Residues 145-207 form the t-SNARE coiled-coil homology domain; sequence QKIIQEQDAG…RNETRRVNMV (63 aa). At S160 the chain carries Phosphoserine. Residues 216-232 form a helical; Anchor for type IV membrane protein membrane-spanning segment; it reads MIMVILLLLVAIVVVAV. The Vesicular segment spans residues 233-236; it reads WPTN.

Belongs to the syntaxin family. As to quaternary structure, forms a SNARE complex with STX7, VTI1B and VAMP8 which functions in the homotypic fusion of late endosomes. Part of the SNARE core complex containing STX7, VAMP8 and VTI1B. Interacts with VAMP8. Interacts with HECTD3. Interacts with TPC1. Ubiquitinated by HECTD3. In terms of tissue distribution, highly expressed in heart. Also found in brain, kidney, liver, lung, placenta, skeletal muscle, spleen and pancreas.

It is found in the membrane. Functionally, vesicle trafficking protein that functions in the early secretory pathway, possibly by mediating retrograde transport from cis-Golgi membranes to the ER. The protein is Syntaxin-8 (STX8) of Homo sapiens (Human).